Here is a 365-residue protein sequence, read N- to C-terminus: MCSVRPAHAVIDLDALRHNYRFARRLGGGKALAVVKADAYGHGAVRCAQALEAEVDGFAVACIEEALELRQAGIQAPILLLEGFFEVEELELIAKHNLWTVIASSWQVRALAAFHSPSPIGVWLKLDSGMHRLGLEPKEFRDAWMSLHSLPQVGEVVLMTHLARADELDNPRTNEQASVFAHASQGMVAPASVCNSSGLLGWAGLYSDWGRPGLMLYGVNPISQESTSLSGPLRPVMMVYSKLIAVRELPAGEPVGYGASFVTERPTRVGVVAMGYADGYPYFAVNGTPLLVDGRVCPLIGRVSMDMLTVDLTDHPQADVGSQVQLWGVQPGVAELAAHCNLSAYQLLCGLKRVRRYYLGEMGAV.

Residue Lys36 is the Proton acceptor; specific for D-alanine of the active site. Lys36 is subject to N6-(pyridoxal phosphate)lysine. Residue Arg132 coordinates substrate. The active-site Proton acceptor; specific for L-alanine is Tyr257. Position 305 (Met305) interacts with substrate.

Belongs to the alanine racemase family. Pyridoxal 5'-phosphate is required as a cofactor.

It carries out the reaction L-alanine = D-alanine. It participates in amino-acid biosynthesis; D-alanine biosynthesis; D-alanine from L-alanine: step 1/1. Its function is as follows. Catalyzes the interconversion of L-alanine and D-alanine. May also act on other amino acids. This is Alanine racemase (alr) from Xylella fastidiosa (strain Temecula1 / ATCC 700964).